The following is a 275-amino-acid chain: 4-deoxy-L-threo-5-hexosulose-uronate ketol-isomerase (275 aa).

Residues histidine 193, histidine 195, glutamate 200, and histidine 242 each coordinate Zn(2+).

It belongs to the KduI family. Zn(2+) serves as cofactor.

It carries out the reaction 5-dehydro-4-deoxy-D-glucuronate = 3-deoxy-D-glycero-2,5-hexodiulosonate. The protein operates within glycan metabolism; pectin degradation; 2-dehydro-3-deoxy-D-gluconate from pectin: step 4/5. Functionally, catalyzes the isomerization of 5-dehydro-4-deoxy-D-glucuronate to 3-deoxy-D-glycero-2,5-hexodiulosonate. This is 4-deoxy-L-threo-5-hexosulose-uronate ketol-isomerase from Bacillus pumilus (strain SAFR-032).